We begin with the raw amino-acid sequence, 75 residues long: Brevinin-2SN2 (75 aa).

An N-terminal signal peptide occupies residues 1-22 (MFTMKKSLLFLFFLGTISLSFC). Residues 23–40 (EEERGADEDDGGEMTEEE) constitute a propeptide, removed in mature form. The cysteines at positions 69 and 75 are disulfide-linked.

The protein belongs to the frog skin active peptide (FSAP) family. Brevinin subfamily. As to expression, expressed by the skin glands.

It is found in the secreted. In terms of biological role, antimicrobial peptide. Active against some Gram-negative and a variety of Gram-positive bacterial strains. Active against fungus C.glabrata 090902 but not against C.albicans ATCC 10231. Shows hemolytic activity against human erythrocytes. This Sylvirana spinulosa (Fine-spined frog) protein is Brevinin-2SN2.